Consider the following 54-residue polypeptide: Ferredoxin (54 aa).

4Fe-4S ferredoxin-type domains lie at 2–28 and 29–54; these read HVIS…EGET and KYVV…ISAE. Positions 8, 11, 14, 18, 36, 39, 42, and 46 each coordinate [4Fe-4S] cluster.

It depends on [4Fe-4S] cluster as a cofactor.

Functionally, ferredoxins are iron-sulfur proteins that transfer electrons in a wide variety of metabolic reactions. This Megasphaera elsdenii protein is Ferredoxin.